A 334-amino-acid chain; its full sequence is Holliday junction branch migration complex subunit RuvB (334 aa).

Residues Met1–Tyr182 are large ATPase domain (RuvB-L). Residues Leu21, Arg22, Gly63, Lys66, Thr67, Thr68, Glu129 to Phe131, Arg172, Tyr182, and Arg219 contribute to the ATP site. Thr67 provides a ligand contact to Mg(2+). A small ATPAse domain (RuvB-S) region spans residues Thr183–Gln253. The interval Ala256–Asp334 is head domain (RuvB-H). Arg311 and Arg316 together coordinate DNA.

It belongs to the RuvB family. In terms of assembly, homohexamer. Forms an RuvA(8)-RuvB(12)-Holliday junction (HJ) complex. HJ DNA is sandwiched between 2 RuvA tetramers; dsDNA enters through RuvA and exits via RuvB. An RuvB hexamer assembles on each DNA strand where it exits the tetramer. Each RuvB hexamer is contacted by two RuvA subunits (via domain III) on 2 adjacent RuvB subunits; this complex drives branch migration. In the full resolvosome a probable DNA-RuvA(4)-RuvB(12)-RuvC(2) complex forms which resolves the HJ.

Its subcellular location is the cytoplasm. The enzyme catalyses ATP + H2O = ADP + phosphate + H(+). The RuvA-RuvB-RuvC complex processes Holliday junction (HJ) DNA during genetic recombination and DNA repair, while the RuvA-RuvB complex plays an important role in the rescue of blocked DNA replication forks via replication fork reversal (RFR). RuvA specifically binds to HJ cruciform DNA, conferring on it an open structure. The RuvB hexamer acts as an ATP-dependent pump, pulling dsDNA into and through the RuvAB complex. RuvB forms 2 homohexamers on either side of HJ DNA bound by 1 or 2 RuvA tetramers; 4 subunits per hexamer contact DNA at a time. Coordinated motions by a converter formed by DNA-disengaged RuvB subunits stimulates ATP hydrolysis and nucleotide exchange. Immobilization of the converter enables RuvB to convert the ATP-contained energy into a lever motion, pulling 2 nucleotides of DNA out of the RuvA tetramer per ATP hydrolyzed, thus driving DNA branch migration. The RuvB motors rotate together with the DNA substrate, which together with the progressing nucleotide cycle form the mechanistic basis for DNA recombination by continuous HJ branch migration. Branch migration allows RuvC to scan DNA until it finds its consensus sequence, where it cleaves and resolves cruciform DNA. The polypeptide is Holliday junction branch migration complex subunit RuvB (Bacillus velezensis (strain DSM 23117 / BGSC 10A6 / LMG 26770 / FZB42) (Bacillus amyloliquefaciens subsp. plantarum)).